A 309-amino-acid polypeptide reads, in one-letter code: Taste receptor type 2 member 46 (309 aa).

A topological domain (extracellular) is located at residue Met1. Residues 2 to 22 (ITFLPIIFSILIVVTFVIGNF) form a helical membrane-spanning segment. The Cytoplasmic portion of the chain corresponds to 23–46 (ANGFIALANSIEWFKRQKISFADQ). Residues 47-67 (ILTALAVSRVGLLWVLLLNWY) traverse the membrane as a helical segment. The Extracellular portion of the chain corresponds to 68-86 (ATELNPAFYSIEVRITAYN). The chain crosses the membrane as a helical span at residues 87-107 (LWAVINHFSNWLATSLSIFYL). Residues 108–126 (LKIANFSNLIFLRLKRRVK) are Cytoplasmic-facing. Residues 127–147 (SVVLVILLGPLLFLVCHLFVI) traverse the membrane as a helical segment. The Extracellular segment spans residues 148-178 (NMNQIIWTKEYEGNMTWKIKLRSAMYLSNIT). N-linked (GlcNAc...) asparagine glycans are attached at residues Asn161 and Asn176. A helical transmembrane segment spans residues 179–199 (VTILANLVPFTLTLISFLLLI). Residues 200–229 (CSLCKHLKKMQLHGKGSQDPSMKVHIKALQ) are Cytoplasmic-facing. The helical transmembrane segment at 230–250 (TVTSFLLLCAIYFLSIIMSVW) threads the bilayer. Topologically, residues 251–259 (SFESLENKP) are extracellular. A helical transmembrane segment spans residues 260-280 (VFMFCEAITFSYPSTHPFILI). Over 281–309 (WGNKKLKQTFLSVLWHVRYWVKGEEPSSP) the chain is Cytoplasmic.

This sequence belongs to the G-protein coupled receptor T2R family.

It localises to the membrane. The protein resides in the cell projection. The protein localises to the cilium membrane. Its function is as follows. Receptor that may play a role in the perception of bitterness and is gustducin-linked. May play a role in sensing the chemical composition of the gastrointestinal content. The activity of this receptor may stimulate alpha gustducin, mediate PLC-beta-2 activation and lead to the gating of TRPM5. In airway epithelial cells, binding of bitter compounds increases the intracellular calcium ion concentration and stimulates ciliary beat frequency. The protein is Taste receptor type 2 member 46 (TAS2R46) of Pan paniscus (Pygmy chimpanzee).